The sequence spans 434 residues: Gamma-glutamyl phosphate reductase (434 aa).

A compositionally biased stretch (polar residues) spans 1–11 (MTNSNEAQENA). A disordered region spans residues 1-26 (MTNSNEAQENALSPERQAERDEVLAK). The span at 16 to 25 (RQAERDEVLA) shows a compositional bias: basic and acidic residues.

The protein belongs to the gamma-glutamyl phosphate reductase family.

The protein resides in the cytoplasm. The enzyme catalyses L-glutamate 5-semialdehyde + phosphate + NADP(+) = L-glutamyl 5-phosphate + NADPH + H(+). It participates in amino-acid biosynthesis; L-proline biosynthesis; L-glutamate 5-semialdehyde from L-glutamate: step 2/2. Functionally, catalyzes the NADPH-dependent reduction of L-glutamate 5-phosphate into L-glutamate 5-semialdehyde and phosphate. The product spontaneously undergoes cyclization to form 1-pyrroline-5-carboxylate. The protein is Gamma-glutamyl phosphate reductase of Corynebacterium jeikeium (strain K411).